Here is a 58-residue protein sequence, read N- to C-terminus: Arabinogalactan protein 21 (58 aa).

Residues 1–24 (MEAMKMKMMVFIMVVAVAFSAATA) form the signal peptide. 4-hydroxyproline is present on residues Pro30, Pro32, and Pro34. Pro30, Pro32, and Pro34 each carry an O-linked (Ara...) hydroxyproline glycan. A lipid anchor (GPI-anchor amidated serine) is attached at Ser36. Positions 37–58 (DAAMFVPALFASVVALASGFIF) are cleaved as a propeptide — removed in mature form.

Belongs to the AG-peptide AGP family. Post-translationally, contains 4-hydroxyproline; hydroxylated on Pro-30, Pro-32 and Pro-34. O-glycosylated on hydroxyprolines; noncontiguous hydroxylproline residues are glycosylated with arabinogalactan.

It is found in the cell membrane. Proteoglycan that seems to be implicated in diverse developmental roles such as differentiation, cell-cell recognition, embryogenesis and programmed cell death. This Arabidopsis thaliana (Mouse-ear cress) protein is Arabinogalactan protein 21.